Reading from the N-terminus, the 78-residue chain is Pigment-dispersing hormone 2 peptides (78 aa).

Positions 1-21 (MRSGVFVAVLVVVVFALLTQG) are cleaved as a signal peptide. A75 is modified (alanine amide).

The protein belongs to the arthropod PDH family. In terms of tissue distribution, eyestalk sinus gland.

It is found in the secreted. In terms of biological role, the pigment-dispersing hormone causes the migration of the distal retinal pigment into the proximal end of the pigment chromatophore cells and thus decreases the amount of light entering the retinulas. May also function as a neurotransmitter and/or neuromodulator. This chain is Pigment-dispersing hormone 2 peptides (PDH2), found in Callinectes sapidus (Blue crab).